The sequence spans 366 residues: Chorismate synthase (366 aa).

Residues R48 and R54 each coordinate NADP(+). FMN is bound by residues 125–127, 242–243, G287, 302–306, and R328; these read RSS, NA, and KPTSS.

Belongs to the chorismate synthase family. Homotetramer. The cofactor is FMNH2.

The enzyme catalyses 5-O-(1-carboxyvinyl)-3-phosphoshikimate = chorismate + phosphate. Its pathway is metabolic intermediate biosynthesis; chorismate biosynthesis; chorismate from D-erythrose 4-phosphate and phosphoenolpyruvate: step 7/7. In terms of biological role, catalyzes the anti-1,4-elimination of the C-3 phosphate and the C-6 proR hydrogen from 5-enolpyruvylshikimate-3-phosphate (EPSP) to yield chorismate, which is the branch point compound that serves as the starting substrate for the three terminal pathways of aromatic amino acid biosynthesis. This reaction introduces a second double bond into the aromatic ring system. The polypeptide is Chorismate synthase (Rhodospirillum rubrum (strain ATCC 11170 / ATH 1.1.1 / DSM 467 / LMG 4362 / NCIMB 8255 / S1)).